Consider the following 485-residue polypeptide: Glutamyl-tRNA(Gln) amidotransferase subunit A (485 aa).

Residues Lys79 and Ser154 each act as charge relay system in the active site. Ser178 functions as the Acyl-ester intermediate in the catalytic mechanism.

Belongs to the amidase family. GatA subfamily. As to quaternary structure, heterotrimer of A, B and C subunits.

It catalyses the reaction L-glutamyl-tRNA(Gln) + L-glutamine + ATP + H2O = L-glutaminyl-tRNA(Gln) + L-glutamate + ADP + phosphate + H(+). In terms of biological role, allows the formation of correctly charged Gln-tRNA(Gln) through the transamidation of misacylated Glu-tRNA(Gln) in organisms which lack glutaminyl-tRNA synthetase. The reaction takes place in the presence of glutamine and ATP through an activated gamma-phospho-Glu-tRNA(Gln). The protein is Glutamyl-tRNA(Gln) amidotransferase subunit A of Clostridium botulinum (strain Eklund 17B / Type B).